A 386-amino-acid chain; its full sequence is MMRNSRPGRAWRGAVVLTGLLALSGCSMFSSDDDRYKPAELTQYAPGMSVRTAWTASVGSGSGLGFAPTVLGESIYAATPDGSVGKFDLLSGRAIWKSSADAKLSAGAGSDGQTTAVATPDGEVIAFDDTGKIKWRARATSDVAIPPVVGYGVVVVRSGDYRIQAFNAENGERMWSMQRPGPALALRSAAQMVLAEGLVISGLPGGKLLAINSATGNVQWEGTVATPRGASDLERLTDVVGAPRIAGRLMCAVAYQGRIVCFDVSAGGRPIWAKDFSSASGMVIDDRFAYAPDQGSVVSAFALDSGNNVWKQAELKNRLLTAPALLGEAVAVGDFEGYVHFLSRSDGRLLARLSVGGGAIVSPPQTTSQGVLVQTGNGSLVMVRAN.

The signal sequence occupies residues 1 to 25; that stretch reads MMRNSRPGRAWRGAVVLTGLLALSG. Residue Cys-26 is the site of N-palmitoyl cysteine attachment. Cys-26 carries S-diacylglycerol cysteine lipidation.

Belongs to the BamB family. In terms of assembly, part of the Bam complex.

Its subcellular location is the cell outer membrane. Functionally, part of the outer membrane protein assembly complex, which is involved in assembly and insertion of beta-barrel proteins into the outer membrane. The sequence is that of Outer membrane protein assembly factor BamB from Bordetella pertussis (strain Tohama I / ATCC BAA-589 / NCTC 13251).